The chain runs to 441 residues: Aminopeptidase C (441 aa).

Residues Cys70, His361, and Asn382 contribute to the active site.

The protein belongs to the peptidase C1 family.

It catalyses the reaction Inactivates bleomycin B2 (a cytotoxic glycometallopeptide) by hydrolysis of a carboxyamide bond of beta-aminoalanine, but also shows general aminopeptidase activity. The specificity varies somewhat with source, but amino acid arylamides of Met, Leu and Ala are preferred.. This is Aminopeptidase C (pepC) from Listeria monocytogenes serovar 1/2a (strain ATCC BAA-679 / EGD-e).